We begin with the raw amino-acid sequence, 128 residues long: Large ribosomal subunit protein bL17 (128 aa).

The protein belongs to the bacterial ribosomal protein bL17 family. Part of the 50S ribosomal subunit. Contacts protein L32.

This chain is Large ribosomal subunit protein bL17, found in Streptococcus suis (strain 98HAH33).